Consider the following 501-residue polypeptide: WD repeat-containing protein wdr-5.3 (501 aa).

3 disordered regions span residues 1–35 (MNPE…LESN), 58–85 (PIGV…YQSH), and 155–197 (KSAE…ITKK). A compositionally biased stretch (polar residues) spans 22-35 (PNQQSLQSRMLESN). Residues 167–177 (SITTKPTSTIQ) are compositionally biased toward polar residues. WD repeat units lie at residues 211–241 (GHTK…KVWN), 253–283 (SHQL…KIFD), 295–325 (GHTN…RVWD), 337–367 (AHSD…RVWD), 381–410 (DHAP…KLWD), 422–455 (GHKN…LVWS), and 467–499 (GHTT…RIWR).

This sequence belongs to the WD repeat WDR5/wds family.

Functionally, not required for methylation of histone H3 'Lys-4'. The sequence is that of WD repeat-containing protein wdr-5.3 (wdr-5.3) from Caenorhabditis elegans.